Reading from the N-terminus, the 404-residue chain is tRNA pseudouridine(31) synthase (404 aa).

Asp168 is an active-site residue.

Belongs to the pseudouridine synthase RluA family.

The protein localises to the cytoplasm. It is found in the mitochondrion. It carries out the reaction uridine(31) in tRNA = pseudouridine(31) in tRNA. Functionally, catalyzes the formation of pseudouridine at position 31 in the psi GC loop of tRNAS. This chain is tRNA pseudouridine(31) synthase (PUS6), found in Saccharomyces cerevisiae (strain ATCC 204508 / S288c) (Baker's yeast).